The chain runs to 377 residues: Terpene synthase 1 (377 aa).

Positions 81–86 (DDALDA) match the DDxx(x)D/E motif motif. Positions 221–229 (NDLVSYEKE) match the NDxxSxxxD/E motif motif. Residues 326–359 (RKQSSSPNLTNSISIPTNNTNNSNNITSSPNKKQ) are disordered. Residues 335–356 (TNSISIPTNNTNNSNNITSSPN) are compositionally biased toward low complexity.

Belongs to the terpene synthase family.

The catalysed reaction is (2E,6E)-farnesyl diphosphate = (2S,3R,6S,9S)-(-)-protoillud-7-ene + diphosphate. Terpene synthase that converts its substrate farnesyl diphosphate (FPP) into the sesquiterpene protoillud-7-ene. This chain is Terpene synthase 1, found in Dictyostelium purpureum (Slime mold).